The following is a 334-amino-acid chain: Ribosomal RNA large subunit methyltransferase F (334 aa).

A disordered region spans residues 1–25; sequence MPRPSSPRPDAERKSASPLHPRNRH.

This sequence belongs to the methyltransferase superfamily. METTL16/RlmF family.

It is found in the cytoplasm. The enzyme catalyses adenosine(1618) in 23S rRNA + S-adenosyl-L-methionine = N(6)-methyladenosine(1618) in 23S rRNA + S-adenosyl-L-homocysteine + H(+). Its function is as follows. Specifically methylates the adenine in position 1618 of 23S rRNA. The chain is Ribosomal RNA large subunit methyltransferase F from Pseudomonas paraeruginosa (strain DSM 24068 / PA7) (Pseudomonas aeruginosa (strain PA7)).